A 903-amino-acid chain; its full sequence is Protein translocase subunit SecA (903 aa).

ATP contacts are provided by residues Q89, G107–T111, and D502. Zn(2+) is bound by residues C886, C888, C897, and H898.

It belongs to the SecA family. Monomer and homodimer. Part of the essential Sec protein translocation apparatus which comprises SecA, SecYEG and auxiliary proteins SecDF-YajC and YidC. Requires Zn(2+) as cofactor.

The protein resides in the cell inner membrane. It is found in the cytoplasm. The catalysed reaction is ATP + H2O + cellular proteinSide 1 = ADP + phosphate + cellular proteinSide 2.. Functionally, part of the Sec protein translocase complex. Interacts with the SecYEG preprotein conducting channel. Has a central role in coupling the hydrolysis of ATP to the transfer of proteins into and across the cell membrane, serving both as a receptor for the preprotein-SecB complex and as an ATP-driven molecular motor driving the stepwise translocation of polypeptide chains across the membrane. In Rhizobium meliloti (strain 1021) (Ensifer meliloti), this protein is Protein translocase subunit SecA.